Consider the following 138-residue polypeptide: Cysteine desulfuration protein SufE (138 aa).

The Cysteine persulfide intermediate role is filled by Cys51.

Belongs to the SufE family. Homodimer. Interacts with SufS.

Its subcellular location is the cytoplasm. It participates in cofactor biosynthesis; iron-sulfur cluster biosynthesis. Participates in cysteine desulfuration mediated by SufS. Cysteine desulfuration mobilizes sulfur from L-cysteine to yield L-alanine and constitutes an essential step in sulfur metabolism for biosynthesis of a variety of sulfur-containing biomolecules. Functions as a sulfur acceptor for SufS, by mediating the direct transfer of the sulfur atom from the S-sulfanylcysteine of SufS, an intermediate product of cysteine desulfuration process. The protein is Cysteine desulfuration protein SufE of Photorhabdus laumondii subsp. laumondii (strain DSM 15139 / CIP 105565 / TT01) (Photorhabdus luminescens subsp. laumondii).